The primary structure comprises 100 residues: Large ribosomal subunit protein uL23 (100 aa).

Belongs to the universal ribosomal protein uL23 family. As to quaternary structure, part of the 50S ribosomal subunit. Contacts protein L29, and trigger factor when it is bound to the ribosome.

Its function is as follows. One of the early assembly proteins it binds 23S rRNA. One of the proteins that surrounds the polypeptide exit tunnel on the outside of the ribosome. Forms the main docking site for trigger factor binding to the ribosome. This is Large ribosomal subunit protein uL23 from Acaryochloris marina (strain MBIC 11017).